The primary structure comprises 671 residues: Condensin complex subunit 2 (671 aa).

Residues 1 to 24 (MDESLTPNPKQKPASTTTRIQAPT) are compositionally biased toward polar residues. 3 disordered regions span residues 1-33 (MDESLTPNPKQKPASTTTRIQAPTSPFFLGSND), 404-444 (NSWA…KQAE), and 510-564 (RRKN…ISQP). The Kleisin-gamma middle domain (GM domain) involved in chromosome-binding motif lies at 406-415 (WAGPDHWKYR). Residues 536–556 (VYDDDDGPFDDNENDQSDAED) are compositionally biased toward acidic residues.

The protein belongs to the CND2 (condensin subunit 2) family. Component of the condensin complex. Mostly expressed in flower buds and flowers, and, to a lower extent, in roots, stems, leaves and seedlings.

It is found in the cytoplasm. Its subcellular location is the chromosome. Functionally, regulatory subunit of the condensin complex, a complex required for conversion of interphase chromatin into mitotic-like condense chromosomes. The condensin complex probably introduces positive supercoils into relaxed DNA in the presence of type I topoisomerases and converts nicked DNA into positive knotted forms in the presence of type II topoisomerases. Essential protein. The protein is Condensin complex subunit 2 (CAPH) of Arabidopsis thaliana (Mouse-ear cress).